We begin with the raw amino-acid sequence, 296 residues long: Cobalamin trafficking protein CblD (296 aa).

The N-terminal 92 residues, 1-92 (MANVLCNRAR…HLNGTAAQRK (92 aa)), are a transit peptide targeting the mitochondrion.

Heterodimer with MMACHC. Forms a multiprotein complex with MMACHC, MTR and MTRR.

Its subcellular location is the cytoplasm. It localises to the mitochondrion. Involved in cobalamin metabolism and trafficking. Plays a role in regulating the biosynthesis and the proportion of two coenzymes, methylcob(III)alamin (MeCbl) and 5'-deoxyadenosylcobalamin (AdoCbl). Promotes oxidation of cob(II)alamin bound to MMACHC. The processing of cobalamin in the cytosol occurs in a multiprotein complex composed of at least MMACHC, MMADHC, MTRR (methionine synthase reductase) and MTR (methionine synthase) which may contribute to shuttle safely and efficiently cobalamin towards MTR in order to produce methionine. This is Cobalamin trafficking protein CblD (MMADHC) from Gallus gallus (Chicken).